The sequence spans 321 residues: Endochitinase 33 (321 aa).

An N-terminal signal peptide occupies residues 1–19 (MPSLTALASLLALVPSALA). The GH18 domain maps to 27-321 (QNIAVYWGQN…FETQVVNALR (295 aa)). Residue Glu-167 is the Proton donor of the active site.

Belongs to the glycosyl hydrolase 18 family. Chitinase class III subfamily. As to quaternary structure, monomer.

It localises to the secreted. The enzyme catalyses Random endo-hydrolysis of N-acetyl-beta-D-glucosaminide (1-&gt;4)-beta-linkages in chitin and chitodextrins.. Functionally, secreted chitinase involved in the degradation of chitin, a component of the cell walls of fungi and exoskeletal elements of some animals (including worms and arthropods). Plays a morphogenetic role during apical growth, cell division and differentiation (cell wall morphogenesis). May be involved in the degradation and further assimilation of phytopathogenic fungi, namely mycoparasitism, the major mechanism accounting for the antagonistic activity against phytopathogenic fungi displayed by Trichoderma. The chain is Endochitinase 33 (chit33) from Trichoderma harzianum (Hypocrea lixii).